A 348-amino-acid chain; its full sequence is NADH-ubiquinone oxidoreductase chain 2 (348 aa).

The next 10 membrane-spanning stretches (helical) occupy residues 3 to 23 (PIII…VLMS), 25 to 45 (HWFM…PVLM), 59 to 79 (YFLT…INLI), 93 to 115 (TAST…HFWV), 149 to 169 (LNMT…GWGG), 178 to 198 (ILAF…MFNP), 201 to 221 (TLLN…ILIF), 239 to 259 (IMTV…PLSG), 276 to 296 (IALA…YMRL), and 326 to 346 (LPTL…MMML).

The protein belongs to the complex I subunit 2 family. Core subunit of respiratory chain NADH dehydrogenase (Complex I) which is composed of 45 different subunits. Interacts with TMEM242.

The protein localises to the mitochondrion inner membrane. The enzyme catalyses a ubiquinone + NADH + 5 H(+)(in) = a ubiquinol + NAD(+) + 4 H(+)(out). Its function is as follows. Core subunit of the mitochondrial membrane respiratory chain NADH dehydrogenase (Complex I) which catalyzes electron transfer from NADH through the respiratory chain, using ubiquinone as an electron acceptor. Essential for the catalytic activity and assembly of complex I. The sequence is that of NADH-ubiquinone oxidoreductase chain 2 from Thyroptera tricolor (Spix's disk-winged bat).